A 146-amino-acid polypeptide reads, in one-letter code: 6-carboxy-5,6,7,8-tetrahydropterin synthase (146 aa).

His27 contributes to the Zn(2+) binding site. Cys37 (proton acceptor) is an active-site residue. 2 residues coordinate Zn(2+): His41 and His43. Catalysis depends on charge relay system residues His78 and Glu129.

This sequence belongs to the PTPS family. QueD subfamily. Homotetramer. Zn(2+) serves as cofactor.

It carries out the reaction 7,8-dihydroneopterin 3'-triphosphate + H2O = 6-carboxy-5,6,7,8-tetrahydropterin + triphosphate + acetaldehyde + 2 H(+). The protein operates within purine metabolism; 7-cyano-7-deazaguanine biosynthesis. Its function is as follows. Catalyzes the conversion of 7,8-dihydroneopterin triphosphate (H2NTP) to 6-carboxy-5,6,7,8-tetrahydropterin (CPH4) and acetaldehyde. The protein is 6-carboxy-5,6,7,8-tetrahydropterin synthase (queD) of Bacillus subtilis (strain 168).